Here is a 338-residue protein sequence, read N- to C-terminus: Lipoate-protein ligase A (338 aa).

A BPL/LPL catalytic domain is found at 29–216 (PATQRVLFLW…AFFAHYGERV (188 aa)). Residues R71, 76–79 (GAVF), and K134 contribute to the ATP site. K134 provides a ligand contact to (R)-lipoate.

The protein belongs to the LplA family. In terms of assembly, monomer.

It is found in the cytoplasm. It catalyses the reaction L-lysyl-[lipoyl-carrier protein] + (R)-lipoate + ATP = N(6)-[(R)-lipoyl]-L-lysyl-[lipoyl-carrier protein] + AMP + diphosphate + H(+). The protein operates within protein modification; protein lipoylation via exogenous pathway; protein N(6)-(lipoyl)lysine from lipoate: step 1/2. It functions in the pathway protein modification; protein lipoylation via exogenous pathway; protein N(6)-(lipoyl)lysine from lipoate: step 2/2. Catalyzes both the ATP-dependent activation of exogenously supplied lipoate to lipoyl-AMP and the transfer of the activated lipoyl onto the lipoyl domains of lipoate-dependent enzymes. The chain is Lipoate-protein ligase A from Salmonella agona (strain SL483).